The sequence spans 457 residues: Glutamate--tRNA ligase 1 (457 aa).

A 'HIGH' region motif is present at residues 9-19; sequence PSPTGYIHIGN. The short motif at 250–254 is the 'KMSKS' region element; that stretch reads GLSKR. Lysine 253 contacts ATP.

The protein belongs to the class-I aminoacyl-tRNA synthetase family. Glutamate--tRNA ligase type 1 subfamily. As to quaternary structure, monomer.

It is found in the cytoplasm. The enzyme catalyses tRNA(Glu) + L-glutamate + ATP = L-glutamyl-tRNA(Glu) + AMP + diphosphate. Catalyzes the attachment of glutamate to tRNA(Glu) in a two-step reaction: glutamate is first activated by ATP to form Glu-AMP and then transferred to the acceptor end of tRNA(Glu). The protein is Glutamate--tRNA ligase 1 of Brucella canis (strain ATCC 23365 / NCTC 10854 / RM-666).